Consider the following 339-residue polypeptide: NADH-quinone oxidoreductase subunit H (339 aa).

9 helical membrane-spanning segments follow: residues 10 to 30, 50 to 70, 82 to 102, 115 to 135, 161 to 181, 187 to 207, 235 to 255, 275 to 295, and 310 to 330; these read FPLI…ILCV, PNVV…KLLF, ILFI…WAVV, VGVL…IIAG, MGLV…SGII, IPWW…ISVL, MGFA…SAMT, IPGF…FLWI, and LGWK…SSVL.

This sequence belongs to the complex I subunit 1 family. In terms of assembly, NDH-1 is composed of 14 different subunits. Subunits NuoA, H, J, K, L, M, N constitute the membrane sector of the complex.

It is found in the cell inner membrane. The enzyme catalyses a quinone + NADH + 5 H(+)(in) = a quinol + NAD(+) + 4 H(+)(out). Its function is as follows. NDH-1 shuttles electrons from NADH, via FMN and iron-sulfur (Fe-S) centers, to quinones in the respiratory chain. The immediate electron acceptor for the enzyme in this species is believed to be ubiquinone. Couples the redox reaction to proton translocation (for every two electrons transferred, four hydrogen ions are translocated across the cytoplasmic membrane), and thus conserves the redox energy in a proton gradient. This subunit may bind ubiquinone. The chain is NADH-quinone oxidoreductase subunit H from Rickettsia canadensis (strain McKiel).